The chain runs to 102 residues: Small ribosomal subunit protein uS10 (102 aa).

This sequence belongs to the universal ribosomal protein uS10 family. As to quaternary structure, part of the 30S ribosomal subunit.

Functionally, involved in the binding of tRNA to the ribosomes. This Clostridium beijerinckii (strain ATCC 51743 / NCIMB 8052) (Clostridium acetobutylicum) protein is Small ribosomal subunit protein uS10.